The following is a 421-amino-acid chain: Calreticulin (421 aa).

The N-terminal stretch at 1-22 is a signal peptide; it reads MAFRVPNSSLLSLILLSLLAIA. N-linked (GlcNAc...) asparagine glycosylation occurs at N56. A disulfide bridge links C110 with C142. Y114, K116, Y133, and D140 together coordinate an alpha-D-glucoside. Residue N156 is glycosylated (N-linked (GlcNAc...) asparagine). 7 repeat units span residues 196–207, 215–226, 232–243, 250–261, 265–275, 279–289, and 293–303. The tract at residues 196-261 is 4 X approximate repeats; that stretch reads KQTGSLYSDW…DAKKPEDWDD (66 aa). The segment at 217-283 is disordered; that stretch reads EAKKPEDWED…NPEYKGEWKP (67 aa). The span at 223-232 shows a compositional bias: acidic residues; the sequence is DWEDQEYIPD. The span at 233 to 257 shows a compositional bias: basic and acidic residues; sequence PEDKKPEGYDDIPKEITDPDAKKPE. The segment at 265–303 is 3 X approximate repeats; that stretch reads GEWTAPTIPNPEYKGEWKPKKIKNPNFKGKWKAPLIDNP. Residue E323 coordinates an alpha-D-glucoside. The span at 350–380 shows a compositional bias: basic and acidic residues; the sequence is EETWGKQKDAEKAAFEELEKKLQEEESKEDP. Positions 350 to 421 are disordered; sequence EETWGKQKDA…ETEAEKHDEL (72 aa). Positions 381-399 are enriched in acidic residues; the sequence is VDSDAEDDDNEAEDGEESD. Positions 418-421 match the Prevents secretion from ER motif; sequence HDEL.

The protein belongs to the calreticulin family.

It localises to the endoplasmic reticulum lumen. In terms of biological role, molecular calcium-binding chaperone promoting folding, oligomeric assembly and quality control in the ER via the calreticulin/calnexin cycle. This lectin may interact transiently with almost all of the monoglucosylated glycoproteins that are synthesized in the ER. The polypeptide is Calreticulin (Prunus armeniaca (Apricot)).